A 122-amino-acid polypeptide reads, in one-letter code: UPF0102 protein BARBAKC583_1042 (122 aa).

It belongs to the UPF0102 family.

The sequence is that of UPF0102 protein BARBAKC583_1042 from Bartonella bacilliformis (strain ATCC 35685 / KC583 / Herrer 020/F12,63).